A 104-amino-acid chain; its full sequence is Large ribosomal subunit protein uL24 (104 aa).

This sequence belongs to the universal ribosomal protein uL24 family. As to quaternary structure, part of the 50S ribosomal subunit.

Functionally, one of two assembly initiator proteins, it binds directly to the 5'-end of the 23S rRNA, where it nucleates assembly of the 50S subunit. Its function is as follows. One of the proteins that surrounds the polypeptide exit tunnel on the outside of the subunit. The protein is Large ribosomal subunit protein uL24 of Methylorubrum populi (strain ATCC BAA-705 / NCIMB 13946 / BJ001) (Methylobacterium populi).